A 117-amino-acid chain; its full sequence is Large ribosomal subunit protein bL17 (117 aa).

The protein belongs to the bacterial ribosomal protein bL17 family. In terms of assembly, part of the 50S ribosomal subunit. Contacts protein L32.

This is Large ribosomal subunit protein bL17 from Thermomicrobium roseum (strain ATCC 27502 / DSM 5159 / P-2).